A 484-amino-acid polypeptide reads, in one-letter code: Malonate-semialdehyde dehydrogenase 3 (484 aa).

Positions 152, 176, 179, 180, and 229 each coordinate NAD(+). Residue C284 is the Nucleophile of the active site. Residue E384 participates in NAD(+) binding.

Belongs to the aldehyde dehydrogenase family. IolA subfamily. As to quaternary structure, homotetramer.

The catalysed reaction is 3-oxopropanoate + NAD(+) + CoA + H2O = hydrogencarbonate + acetyl-CoA + NADH + H(+). It carries out the reaction 2-methyl-3-oxopropanoate + NAD(+) + CoA + H2O = propanoyl-CoA + hydrogencarbonate + NADH + H(+). Its pathway is polyol metabolism; myo-inositol degradation into acetyl-CoA; acetyl-CoA from myo-inositol: step 7/7. Its function is as follows. Catalyzes the oxidation of malonate semialdehyde (MSA) and methylmalonate semialdehyde (MMSA) into acetyl-CoA and propanoyl-CoA, respectively. Is involved in a myo-inositol catabolic pathway. Bicarbonate, and not CO2, is the end-product of the enzymatic reaction. This is Malonate-semialdehyde dehydrogenase 3 from Geobacillus kaustophilus (strain HTA426).